A 102-amino-acid polypeptide reads, in one-letter code: Small ribosomal subunit protein uS10 (102 aa).

It belongs to the universal ribosomal protein uS10 family. As to quaternary structure, part of the 30S ribosomal subunit.

Functionally, involved in the binding of tRNA to the ribosomes. The protein is Small ribosomal subunit protein uS10 of Methanospirillum hungatei JF-1 (strain ATCC 27890 / DSM 864 / NBRC 100397 / JF-1).